A 58-amino-acid chain; its full sequence is Ribulose bisphosphate carboxylase large chain (58 aa).

A propeptide spanning residues 1–2 is cleaved from the precursor; it reads MS. Proline 3 is modified (N-acetylproline). Lysine 14 is modified (N6,N6,N6-trimethyllysine).

This sequence belongs to the RuBisCO large chain family. Type I subfamily. Heterohexadecamer of 8 large chains and 8 small chains.

It is found in the plastid. It localises to the chloroplast. The catalysed reaction is 2 (2R)-3-phosphoglycerate + 2 H(+) = D-ribulose 1,5-bisphosphate + CO2 + H2O. It carries out the reaction D-ribulose 1,5-bisphosphate + O2 = 2-phosphoglycolate + (2R)-3-phosphoglycerate + 2 H(+). Functionally, ruBisCO catalyzes two reactions: the carboxylation of D-ribulose 1,5-bisphosphate, the primary event in carbon dioxide fixation, as well as the oxidative fragmentation of the pentose substrate in the photorespiration process. Both reactions occur simultaneously and in competition at the same active site. In Rosa damascena (Damask rose), this protein is Ribulose bisphosphate carboxylase large chain (rbcL).